Consider the following 216-residue polypeptide: Large ribosomal subunit protein uL3 (216 aa).

Residue Gln153 is modified to N5-methylglutamine.

It belongs to the universal ribosomal protein uL3 family. Part of the 50S ribosomal subunit. Forms a cluster with proteins L14 and L19. Methylated by PrmB.

Its function is as follows. One of the primary rRNA binding proteins, it binds directly near the 3'-end of the 23S rRNA, where it nucleates assembly of the 50S subunit. The sequence is that of Large ribosomal subunit protein uL3 from Burkholderia ambifaria (strain MC40-6).